The sequence spans 368 residues: uncharacterized protein (368 aa).

The 118-residue stretch at 3–120 (KILLADDERI…QIISSLEEII (118 aa)) folds into the Response regulatory domain. D55 carries the 4-aspartylphosphate modification. The HTH araC/xylS-type domain maps to 259-361 (SKMIRLIADE…GLTPSEFRRK (103 aa)). DNA-binding regions (H-T-H motif) lie at residues 278–299 (WAAK…KQET) and 327–351 (VSEI…KKYT).

In terms of processing, phosphorylated by YesM.

It is found in the cytoplasm. Member of the two-component regulatory system YesM/YesN. This is an uncharacterized protein from Bacillus subtilis (strain 168).